Here is a 92-residue protein sequence, read N- to C-terminus: Small ribosomal subunit protein uS19c (92 aa).

The protein belongs to the universal ribosomal protein uS19 family.

Its subcellular location is the plastid. The protein resides in the chloroplast. Its function is as follows. Protein S19 forms a complex with S13 that binds strongly to the 16S ribosomal RNA. This Anthoceros angustus (Hornwort) protein is Small ribosomal subunit protein uS19c (rps19).